Reading from the N-terminus, the 550-residue chain is Methionine--tRNA ligase (550 aa).

A 'HIGH' region motif is present at residues 13-23 (PYANGEIHLGH). Residues Cys-144, Cys-147, Cys-157, and Cys-160 each contribute to the Zn(2+) site. Positions 329 to 333 (KMSKS) match the 'KMSKS' region motif. Lys-332 provides a ligand contact to ATP.

It belongs to the class-I aminoacyl-tRNA synthetase family. MetG type 1 subfamily. As to quaternary structure, monomer. The cofactor is Zn(2+).

Its subcellular location is the cytoplasm. The enzyme catalyses tRNA(Met) + L-methionine + ATP = L-methionyl-tRNA(Met) + AMP + diphosphate. Functionally, is required not only for elongation of protein synthesis but also for the initiation of all mRNA translation through initiator tRNA(fMet) aminoacylation. The polypeptide is Methionine--tRNA ligase (Ruthia magnifica subsp. Calyptogena magnifica).